Here is a 361-residue protein sequence, read N- to C-terminus: G-protein coupled receptor 52 (361 aa).

At 1–44 (MNDSRWTEWRILNTSSGILNVSERHSCPLGFGHYSAVDVCIFET) the chain is on the extracellular side. N-linked (GlcNAc...) asparagine glycosylation is found at N2, N13, and N20. The helical transmembrane segment at 45–65 (IVIVLLTFLIIAGNLTVIFVF) threads the bilayer. The Cytoplasmic segment spans residues 66-87 (HCAPLLHHYTTSYFIQTMAYAD). Residues 88–108 (LFVGVSCLVPTLSLLHYSTGI) form a helical membrane-spanning segment. Over 109-115 (HESLTCQ) the chain is Extracellular. A disulfide bond links C114 and C193. A helical membrane pass occupies residues 116 to 136 (VFGYIISVLKSVSMACLACIS). At 137 to 159 (VDRYLAITKPLSYNQLVTPCRLR) the chain is on the cytoplasmic side. Residues 160 to 180 (ICIILIWIYSCLIFLPSFFGW) form a helical membrane-spanning segment. Residues 181-200 (GKPGYHGDIFEWCATSWLTS) are Extracellular-facing. A helical transmembrane segment spans residues 201-221 (AYFTGFIVCLLYAPAALVVCF). At 222 to 265 (TYFHIFKICRQHTKEINDRRARFPSHEAAASRDAGHSPDRRYAM) the chain is on the cytoplasmic side. A helical transmembrane segment spans residues 266 to 286 (VLFRITSVFYMLWLPYIIYFL). Topologically, residues 287–296 (LESSRVLDNP) are extracellular. The chain crosses the membrane as a helical span at residues 297–317 (TLSFLTTWLAISNSFCNCVIY). Topologically, residues 318-361 (SLSNSVFRLGLRRLSETMCTSCMCVKDKEARDPKPRKRANSCSI) are cytoplasmic.

The protein belongs to the G-protein coupled receptor 1 family.

The protein localises to the cell membrane. Functionally, G- protein coupled receptor activated by antipsychotics reserpine leading to an increase in intracellular cAMP and its internalization. May play a role in locomotor activity through modulation of dopamine, NMDA and ADORA2A-induced locomotor activity. These behavioral changes are accompanied by modulation of the dopamine receptor signaling pathway in striatum. Modulates HTT level via cAMP-dependent but PKA independent mechanisms throught activation of RAB39B that translocates HTT to the endoplasmic reticulum, thus avoiding proteasome degradation. The polypeptide is G-protein coupled receptor 52 (Bos taurus (Bovine)).